A 504-amino-acid chain; its full sequence is uncharacterized protein (504 aa).

Disordered regions lie at residues 1-59 (MSSS…KNEY) and 171-255 (GVNS…NQRL). 2 stretches are compositionally biased toward basic and acidic residues: residues 36 to 50 (KPID…KEIG) and 199 to 212 (RAET…ESRQ). The span at 213-232 (SNRGNNDNGDQRMTSKATTR) shows a compositional bias: polar residues.

This is an uncharacterized protein from Caenorhabditis elegans.